We begin with the raw amino-acid sequence, 205 residues long: Probable GTP-binding protein EngB (205 aa).

The EngB-type G domain maps to 27–201 (TGIEIAFAGR…AAKLDFWFSP (175 aa)). Residues 35 to 42 (GRSNAGKS), 62 to 66 (GRTQL), 80 to 83 (DLPG), 147 to 150 (TKAD), and 180 to 182 (FSA) each bind GTP. 2 residues coordinate Mg(2+): Ser42 and Thr64.

This sequence belongs to the TRAFAC class TrmE-Era-EngA-EngB-Septin-like GTPase superfamily. EngB GTPase family. The cofactor is Mg(2+).

In terms of biological role, necessary for normal cell division and for the maintenance of normal septation. This Haemophilus influenzae (strain 86-028NP) protein is Probable GTP-binding protein EngB.